We begin with the raw amino-acid sequence, 679 residues long: Protein hook (679 aa).

In terms of domain architecture, Calponin-homology (CH) spans 6-123; that stretch reads NEMYYSLLEW…RLLQLVLGCA (118 aa). Coiled-coil stretches lie at residues 135 to 437 and 480 to 574; these read EIMC…LKCG and QTAL…QEIL.

Belongs to the hook family. Homodimer. Interacts with microtubules via its N-terminus.

The protein localises to the cytoplasm. It localises to the cytoskeleton. Its subcellular location is the endosome. It is found in the synapse. Its function is as follows. Involved in endocytic trafficking by stabilizing organelles of the endocytic pathway. Probably acts as a cytoskeletal linker protein required to tether endosome vesicles to the cytoskeleton. Involved in modulation of endocytosis at stages required for down-regulation of membrane proteins that control synapse size. Not involved in synaptic vesicle recycling. Required in R7 cells for boss endocytosis into multivesicular bodies (MVBs). Has a role in regulating adult longevity. This chain is Protein hook, found in Drosophila sechellia (Fruit fly).